A 207-amino-acid polypeptide reads, in one-letter code: N-(5'-phosphoribosyl)anthranilate isomerase (207 aa).

It belongs to the TrpF family.

The enzyme catalyses N-(5-phospho-beta-D-ribosyl)anthranilate = 1-(2-carboxyphenylamino)-1-deoxy-D-ribulose 5-phosphate. Its pathway is amino-acid biosynthesis; L-tryptophan biosynthesis; L-tryptophan from chorismate: step 3/5. The polypeptide is N-(5'-phosphoribosyl)anthranilate isomerase (Geotalea daltonii (strain DSM 22248 / JCM 15807 / FRC-32) (Geobacter daltonii)).